Consider the following 277-residue polypeptide: Large ribosomal subunit protein uL2 (277 aa).

Residues 219 to 277 are disordered; it reads TVRGSVMNPNDHPHGGGEGKAPVGRKAPSTPWGKPALGLKTRNKKAKSNKLIVRRRNEK. Basic residues predominate over residues 259-277; it reads TRNKKAKSNKLIVRRRNEK.

It belongs to the universal ribosomal protein uL2 family. As to quaternary structure, part of the 50S ribosomal subunit. Forms a bridge to the 30S subunit in the 70S ribosome.

Functionally, one of the primary rRNA binding proteins. Required for association of the 30S and 50S subunits to form the 70S ribosome, for tRNA binding and peptide bond formation. It has been suggested to have peptidyltransferase activity; this is somewhat controversial. Makes several contacts with the 16S rRNA in the 70S ribosome. This chain is Large ribosomal subunit protein uL2, found in Streptococcus equi subsp. zooepidemicus (strain MGCS10565).